The chain runs to 148 residues: Small ribosomal subunit protein bS6 (148 aa).

The interval 97–148 (EEGPSAMLQRRDDRERGDRGDRGPRRDFDDRGPRRPREDDRPRRSREDEGDE) is disordered.

Belongs to the bacterial ribosomal protein bS6 family.

Functionally, binds together with bS18 to 16S ribosomal RNA. In Chelativorans sp. (strain BNC1), this protein is Small ribosomal subunit protein bS6.